Here is a 317-residue protein sequence, read N- to C-terminus: Protoheme IX farnesyltransferase (317 aa).

The next 9 membrane-spanning stretches (helical) occupy residues 28 to 48 (IIPLLLITTAASMWIASHGHI), 53 to 73 (LLITLLGGTLAAASAQTLNCI), 101 to 121 (LIFALILGSLSFSLLMVFVNL), 122 to 142 (LSACLALSGIVFYMLVYTHWL), 150 to 170 (IVIGGAAGSIPPLVGWAAVTG), 178 to 198 (ILFALIFLWTPPHFWALALMI), 223 to 243 (IWIYTLIVVPFSLLLVFPFQA), 246 to 266 (LFYAIAALVLGAIFIQKAWEL), and 282 to 302 (YSILYMMLLCTAMVVDSLPAV).

Belongs to the UbiA prenyltransferase family. Protoheme IX farnesyltransferase subfamily.

It localises to the cell inner membrane. The enzyme catalyses heme b + (2E,6E)-farnesyl diphosphate + H2O = Fe(II)-heme o + diphosphate. It participates in porphyrin-containing compound metabolism; heme O biosynthesis; heme O from protoheme: step 1/1. Its function is as follows. Converts heme B (protoheme IX) to heme O by substitution of the vinyl group on carbon 2 of heme B porphyrin ring with a hydroxyethyl farnesyl side group. The protein is Protoheme IX farnesyltransferase of Picosynechococcus sp. (strain ATCC 27264 / PCC 7002 / PR-6) (Agmenellum quadruplicatum).